Reading from the N-terminus, the 337-residue chain is MTLKFVKGESDNLELAKGRAAFVLVIGNTKTANIEGITVAGANPELIKYTPPADAELLYHGKCLSIDGVPATPDGKPTPALITYTALRLTSIPLFVVNSGLMVPPKIPYIDLNAPVGENIAESRAMDREKVEEVLERAKIVGRQLSKLSDVLIIGESIPAGTTTAAAVLKALGLNAAVSSSMPENPVELKRKVVERAVERVESNDPIEVLSAVGDPVMVGVAGIALGSEKPVILAGGTQMVAIANLIARMGEVEAVIATTKYVASDATADLSLSPFPVIASDPMLGKSRYPGLRAYEEGFVKEGVGAGGMTSVAYARGITPEKFLEEVEKDYERIVL.

This sequence belongs to the UPF0284 family.

The polypeptide is UPF0284 protein AF_0276 (Archaeoglobus fulgidus (strain ATCC 49558 / DSM 4304 / JCM 9628 / NBRC 100126 / VC-16)).